A 146-amino-acid chain; its full sequence is Large ribosomal subunit protein uL15 (146 aa).

Residues 1–39 (MTLKLHNLRPAPGAKTAKTRVGRGEGSKGKTAGRGTKGT) are disordered.

The protein belongs to the universal ribosomal protein uL15 family. In terms of assembly, part of the 50S ribosomal subunit.

In terms of biological role, binds to the 23S rRNA. The sequence is that of Large ribosomal subunit protein uL15 from Nocardioides sp. (strain ATCC BAA-499 / JS614).